The following is an 822-amino-acid chain: ATP-dependent zinc metalloprotease FtsH (822 aa).

The Cytoplasmic segment spans residues 1 to 76 (MEFNKLELLI…NQKEPGKARK (76 aa)). Residues 44 to 54 (SLDQPSDAPSN) show a composition bias toward polar residues. The segment at 44–71 (SLDQPSDAPSNNKKRNLDQPDNPNQKEP) is disordered. A helical transmembrane segment spans residues 77–97 (IIWSFIIIILVLGVLALIILS). Over 98–251 (GFSFSATSLN…QSMSLPTSYS (154 aa)) the chain is Extracellular. Residues 252 to 272 (FYTAASLVLSILPFILLIGII) form a helical membrane-spanning segment. Residues 273–822 (YYSMRKMGQA…SKESSSDKKK (550 aa)) lie on the Cytoplasmic side of the membrane. Residue 347-354 (GPPGTGKT) coordinates ATP. A Zn(2+)-binding site is contributed by H569. E570 is a catalytic residue. The Zn(2+) site is built by H573 and D648. Residues 758 to 794 (KKELEEKKKAEDLIRKAKKESEASSKEEKEMDVEKKV) show a composition bias toward basic and acidic residues. Residues 758–822 (KKELEEKKKA…SKESSSDKKK (65 aa)) are disordered. A compositionally biased stretch (low complexity) spans 796–805 (KPSASSTEPT). Residues 812–822 (PSKESSSDKKK) show a composition bias toward basic and acidic residues.

This sequence in the central section; belongs to the AAA ATPase family. In the C-terminal section; belongs to the peptidase M41 family. Homohexamer. Zn(2+) serves as cofactor.

The protein resides in the cell membrane. Acts as a processive, ATP-dependent zinc metallopeptidase for both cytoplasmic and membrane proteins. Plays a role in the quality control of integral membrane proteins. This is ATP-dependent zinc metalloprotease FtsH from Malacoplasma penetrans (strain HF-2) (Mycoplasma penetrans).